Consider the following 93-residue polypeptide: uncharacterized protein (93 aa).

An N-terminal signal peptide occupies residues 1 to 22 (MSIPNLSSVTQLLSIATGLVST). Asparagine 5 is a glycosylation site (N-linked (GlcNAc...) asparagine; by host).

This is an uncharacterized protein from Invertebrate iridescent virus 6 (IIV-6).